Consider the following 46-residue polypeptide: Escargot/snail protein homolog (46 aa).

C2H2-type zinc fingers lie at residues His-1–His-4, Cys-9–His-30, and Ser-36–Ala-46.

This sequence belongs to the snail C2H2-type zinc-finger protein family.

The protein resides in the nucleus. This chain is Escargot/snail protein homolog, found in Lithobius forficatus (Centipede).